A 216-amino-acid polypeptide reads, in one-letter code: Maintenance of carboxysome distribution protein A (216 aa).

ATP contacts are provided by Gly-16, Gly-17, Gly-19, Lys-20, Thr-21, Thr-22, and Gln-45. Residue Thr-21 participates in Mg(2+) binding.

Belongs to the ParA family. McdA subfamily. Self-associates, associates with McdB.

It is found in the cytoplasm. Its subcellular location is the nucleoid. It carries out the reaction ATP + H2O = ADP + phosphate + H(+). Functionally, mcdA and McdB together mediate carboxysome positioning on the nucleoid and prevent their aggregation in the cell. McdA is an ATPase that forms dynamic gradients on the nucleoid in response to adapter protein McdB, which associates with carboxysomes. The interplay between McdA gradients on the nucleoid and McdB-bound carboxysomes result in the equal spacing of Cbs along the cell length. Incorrect positioning (aggregation) of carboxysomes results in reduced CO(2) fixation by encapsulated form 1 ribulose-1,5-bisphosphate carboxylase (RuBisCO, cbbL/cbbS), which leads to slower growth. The chain is Maintenance of carboxysome distribution protein A from Halothiobacillus neapolitanus (strain ATCC 23641 / c2) (Thiobacillus neapolitanus).